Here is a 324-residue protein sequence, read N- to C-terminus: Glutamyl-Q tRNA(Asp) synthetase (324 aa).

L-glutamate-binding positions include 5–9 (RLAPS) and Glu41. The 'HIGH' region motif lies at 8-18 (PSPTGNIHLGN). Residues Cys105, Cys107, Tyr128, and Cys132 each contribute to the Zn(2+) site. 2 residues coordinate L-glutamate: Tyr193 and Arg211. Positions 249 to 253 (RLAKR) match the 'KMSKS' region motif. Lys252 lines the ATP pocket.

This sequence belongs to the class-I aminoacyl-tRNA synthetase family. GluQ subfamily. Zn(2+) serves as cofactor.

In terms of biological role, catalyzes the tRNA-independent activation of glutamate in presence of ATP and the subsequent transfer of glutamate onto a tRNA(Asp). Glutamate is transferred on the 2-amino-5-(4,5-dihydroxy-2-cyclopenten-1-yl) moiety of the queuosine in the wobble position of the QUC anticodon. The chain is Glutamyl-Q tRNA(Asp) synthetase from Nitratidesulfovibrio vulgaris (strain ATCC 29579 / DSM 644 / CCUG 34227 / NCIMB 8303 / VKM B-1760 / Hildenborough) (Desulfovibrio vulgaris).